Consider the following 318-residue polypeptide: Pantothenate kinase (318 aa).

96–103 (GSVAVGKS) contributes to the ATP binding site.

This sequence belongs to the prokaryotic pantothenate kinase family.

Its subcellular location is the cytoplasm. It catalyses the reaction (R)-pantothenate + ATP = (R)-4'-phosphopantothenate + ADP + H(+). Its pathway is cofactor biosynthesis; coenzyme A biosynthesis; CoA from (R)-pantothenate: step 1/5. The protein is Pantothenate kinase of Coxiella burnetii (strain Dugway 5J108-111).